The chain runs to 99 residues: Cytochrome c oxidase subunit 4 isoform 1, mitochondrial (99 aa).

The Mitochondrial matrix portion of the chain corresponds to Ser1 to Asn73. At Lys4 the chain carries N6-acetyllysine; alternate. Lys4 is subject to N6-succinyllysine; alternate. Lys28 is subject to N6-acetyllysine. Ser31 and Ser33 each carry phosphoserine. An N6-acetyllysine; alternate modification is found at Lys35. The residue at position 35 (Lys35) is an N6-succinyllysine; alternate. The residue at position 42 (Lys42) is an N6-acetyllysine. A helical membrane pass occupies residues Glu74–Tyr99.

It belongs to the cytochrome c oxidase IV family. Component of the cytochrome c oxidase (complex IV, CIV), a multisubunit enzyme composed of 14 subunits. The complex is composed of a catalytic core of 3 subunits MT-CO1, MT-CO2 and MT-CO3, encoded in the mitochondrial DNA, and 11 supernumerary subunits COX4I, COX5A, COX5B, COX6A, COX6B, COX6C, COX7A, COX7B, COX7C, COX8 and NDUFA4, which are encoded in the nuclear genome. The complex exists as a monomer or a dimer and forms supercomplexes (SCs) in the inner mitochondrial membrane with NADH-ubiquinone oxidoreductase (complex I, CI) and ubiquinol-cytochrome c oxidoreductase (cytochrome b-c1 complex, complex III, CIII), resulting in different assemblies (supercomplex SCI(1)III(2)IV(1) and megacomplex MCI(2)III(2)IV(2)). Interacts with PHB2; the interaction decreases in absence of SPHK2. Interacts with AFG1L. Interacts with ABCB7; this interaction allows the regulation of cellular iron homeostasis and cellular reactive oxygen species (ROS) levels in cardiomyocytes. Interacts with FLVCR2; this interaction occurs in the absence of heme and is disrupted upon heme binding. Interacts with IRGC.

Its subcellular location is the mitochondrion inner membrane. The protein operates within energy metabolism; oxidative phosphorylation. In terms of biological role, component of the cytochrome c oxidase, the last enzyme in the mitochondrial electron transport chain which drives oxidative phosphorylation. The respiratory chain contains 3 multisubunit complexes succinate dehydrogenase (complex II, CII), ubiquinol-cytochrome c oxidoreductase (cytochrome b-c1 complex, complex III, CIII) and cytochrome c oxidase (complex IV, CIV), that cooperate to transfer electrons derived from NADH and succinate to molecular oxygen, creating an electrochemical gradient over the inner membrane that drives transmembrane transport and the ATP synthase. Cytochrome c oxidase is the component of the respiratory chain that catalyzes the reduction of oxygen to water. Electrons originating from reduced cytochrome c in the intermembrane space (IMS) are transferred via the dinuclear copper A center (CU(A)) of subunit 2 and heme A of subunit 1 to the active site in subunit 1, a binuclear center (BNC) formed by heme A3 and copper B (CU(B)). The BNC reduces molecular oxygen to 2 water molecules using 4 electrons from cytochrome c in the IMS and 4 protons from the mitochondrial matrix. The chain is Cytochrome c oxidase subunit 4 isoform 1, mitochondrial (COX4I1) from Trachypithecus cristatus (Silvered leaf-monkey).